The following is a 168-amino-acid chain: Peptidyl-prolyl cis-trans isomerase-like 3 (168 aa).

A PPIase cyclophilin-type domain is found at 1-156; the sequence is MSVTLHTNVG…SEIRMTGVTV (156 aa).

Belongs to the cyclophilin-type PPIase family. PPIL3 subfamily.

The enzyme catalyses [protein]-peptidylproline (omega=180) = [protein]-peptidylproline (omega=0). Its function is as follows. PPIases accelerate the folding of proteins. It catalyzes the cis-trans isomerization of proline imidic peptide bonds in oligopeptides. The polypeptide is Peptidyl-prolyl cis-trans isomerase-like 3 (CYP10) (Mycosarcoma maydis (Corn smut fungus)).